A 403-amino-acid polypeptide reads, in one-letter code: Neuromedin U receptor homolog nmur-2 (403 aa).

Residues 1–27 are Extracellular-facing; that stretch reads MSQCTVEYNVSEITEYVLSTLGERCQS. The chain crosses the membrane as a helical span at residues 28–48; that stretch reads AGIVIPTVIIYGTIFLLGLFG. Topologically, residues 49 to 68 are cytoplasmic; sequence NICTCIVIAANKSMHNPTNY. The helical transmembrane segment at 69 to 89 threads the bilayer; the sequence is YLFSLAVSDIIALILGLPMEF. Residues 90 to 109 lie on the Extracellular side of the membrane; sequence YQSLDYSYPYRFSEGICKAR. A helical membrane pass occupies residues 110 to 130; the sequence is AFLIEFTSYASIMIICCFSFE. Over 131–151 the chain is Cytoplasmic; that stretch reads RWLAICHPLRSKIFSTLWRAN. Residues 152 to 172 form a helical membrane-spanning segment; the sequence is VLIILAWTISFVCALPIAFIV. The Extracellular portion of the chain corresponds to 173–216; the sequence is QINKLPLPEDAKYQPWTNKVSTDGIFVLHTEFCAMNQSRPDQQK. A helical transmembrane segment spans residues 217–237; that stretch reads MIIIFAFTVFFVIPAIAIVIM. At 238–268 the chain is on the cytoplasmic side; it reads YAHIAVQLESSEIDLKGDKMVKKRRNKSNRT. The chain crosses the membrane as a helical span at residues 269–289; it reads VLKMLLSVVITFFICWLPFHI. Over 290–304 the chain is Extracellular; the sequence is QRLLSVYTTWSETTT. Residues 305 to 325 traverse the membrane as a helical segment; sequence ISPPVQFLSMIVFYISGFCYY. The Cytoplasmic portion of the chain corresponds to 326-403; that stretch reads SNSAANPILY…PHRKLEVHNY (78 aa).

The protein belongs to the G-protein coupled receptor 1 family.

The protein resides in the membrane. Putative G protein-coupled receptor for pyrokinin-like neuropeptide derived from the processing of the neuropeptide precursor capa-1. This chain is Neuromedin U receptor homolog nmur-2, found in Caenorhabditis elegans.